A 331-amino-acid polypeptide reads, in one-letter code: Cytoskeleton protein RodZ (331 aa).

Topologically, residues Met1–Gly111 are cytoplasmic. An HTH cro/C1-type domain is found at Leu19–Leu71. Positions Gln30–Asp49 form a DNA-binding region, H-T-H motif. The helical; Signal-anchor for type II membrane protein transmembrane segment at Trp112 to Trp132 threads the bilayer. Over Trp133 to Gln331 the chain is Periplasmic. Residues Met146–Leu166 show a composition bias toward polar residues. Residues Met146 to Asn238 are disordered. 2 stretches are compositionally biased toward low complexity: residues Asp167–Asp202 and Thr216–Thr234.

It belongs to the RodZ family.

The protein resides in the cell inner membrane. Cytoskeletal protein that is involved in cell-shape control through regulation of the length of the long axis. The sequence is that of Cytoskeleton protein RodZ from Klebsiella pneumoniae subsp. pneumoniae (strain ATCC 700721 / MGH 78578).